The following is a 611-amino-acid chain: Actin-related protein 5 (611 aa).

Coiled coils occupy residues 290–329 (TLTS…LDRL) and 355–386 (SAEE…NIEV).

It belongs to the actin family. ARP5 subfamily. As to quaternary structure, component of the chromatin remodeling INO80 complex.

The protein localises to the nucleus. In terms of biological role, proposed core component of the chromatin remodeling INO80 complex which is involved in transcriptional regulation, DNA replication and probably DNA repair. The polypeptide is Actin-related protein 5 (ACTR5) (Gallus gallus (Chicken)).